Here is a 304-residue protein sequence, read N- to C-terminus: uncharacterized protein (304 aa).

Coiled-coil stretches lie at residues 3-35 (KNQYISQNMENKEIENKEIENKKTDSKEFDKEI) and 89-132 (KSNK…NSNL). Residues 96 to 121 (LQNKQQENSEEKNSEEKNSEEKNSEE) are disordered.

This is an uncharacterized protein from Acanthamoeba polyphaga (Amoeba).